A 148-amino-acid chain; its full sequence is Calmodulin-4 (148 aa).

4 EF-hand domains span residues 8–43, 44–79, 80–115, and 116–148; these read EEVAEFQAAFNRFDKNKDGHISVEELGDVMKQLGKN, LPEKDLKALISKLDTDGDGKISFEEFLTAIEKYKKG, HRAGELRAVFNVLDQNGDGYITVDELKESLSKLGES, and LSQEELEDMIRVADVDQDGKVKYEEFVRLHVEN. 15 residues coordinate Ca(2+): aspartate 21, asparagine 23, aspartate 25, histidine 27, glutamate 32, aspartate 57, aspartate 59, aspartate 61, lysine 63, glutamate 68, aspartate 93, asparagine 95, aspartate 97, tyrosine 99, and glutamate 104.

In terms of biological role, implicated in the early stage of ectopic ossification. The sequence is that of Calmodulin-4 (Calm4) from Mus musculus (Mouse).